Here is a 162-residue protein sequence, read N- to C-terminus: FCS-Like Zinc finger 6 (162 aa).

Disordered regions lie at residues 25 to 47 and 121 to 162; these read NLPS…YGSN and RQEQ…AAAV. Positions 27-47 are enriched in polar residues; that stretch reads PSESEPSNQQKPTVASPYGSN. The segment at 88–132 adopts an FLZ-type zinc-finger fold; it reads HFLRSCALCERLLVPGRDIYMYRGDKAFCSSECRQEQMAQDERKE. Residues 147-162 are compositionally biased toward low complexity; it reads APARAKPGKGRAAAAV.

The protein belongs to the FLZ family. As to quaternary structure, interacts with KIN10 and KIN11 via its FLZ-type zinc finger domain. Early expressed in hypocotyl and cotyledon. Later expressed in old or senescing leaves and in pistil, pollen and filament of open flowers.

It localises to the nucleus. It is found in the cytoplasm. The protein localises to the endoplasmic reticulum. In terms of biological role, may act as an adapter to facilitate the interaction of SnRK1 complex with effector proteins, conferring tissue- and stimulus-type specific differences in the SnRK1 regulation pathway. Negatively regulates KIN10 leading to a repression of the SnRK1 signaling pathway. The polypeptide is FCS-Like Zinc finger 6 (Arabidopsis thaliana (Mouse-ear cress)).